The sequence spans 120 residues: Ribonuclease P protein component (120 aa).

This sequence belongs to the RnpA family. Consists of a catalytic RNA component (M1 or rnpB) and a protein subunit.

The enzyme catalyses Endonucleolytic cleavage of RNA, removing 5'-extranucleotides from tRNA precursor.. Its function is as follows. RNaseP catalyzes the removal of the 5'-leader sequence from pre-tRNA to produce the mature 5'-terminus. It can also cleave other RNA substrates such as 4.5S RNA. The protein component plays an auxiliary but essential role in vivo by binding to the 5'-leader sequence and broadening the substrate specificity of the ribozyme. The polypeptide is Ribonuclease P protein component (Chlamydia trachomatis serovar A (strain ATCC VR-571B / DSM 19440 / HAR-13)).